Reading from the N-terminus, the 457-residue chain is Beta-1,4-mannosyltransferase egh (457 aa).

6 helical membrane passes run 8 to 28 (LLHC…SGGI), 35 to 55 (FTLV…LYLL), 57 to 77 (FLTL…VFYN), 346 to 366 (LLGI…NIIF), 378 to 398 (VDFV…FGVI), and 415 to 435 (VLGA…AVIW).

Belongs to the glycosyltransferase 2 family.

The protein localises to the membrane. In terms of biological role, glycosyltransferase with a proposed role in glycosphingolipid biosynthesis. Neurogenic protein implicated in epithelial development. Critical component of a differential oocyte-follicle cell adhesive system. This chain is Beta-1,4-mannosyltransferase egh (egh), found in Drosophila melanogaster (Fruit fly).